Reading from the N-terminus, the 351-residue chain is Alcohol dehydrogenase 2 (351 aa).

Zn(2+) contacts are provided by Cys-47, His-70, Cys-101, Cys-104, Cys-107, Cys-115, and Cys-157. Residues 181–187 (GAGGGLG), Asp-205, Lys-209, 271–273 (VGL), and Arg-343 each bind NAD(+).

It belongs to the zinc-containing alcohol dehydrogenase family. In terms of assembly, homotetramer. Requires Zn(2+) as cofactor.

The catalysed reaction is a primary alcohol + NAD(+) = an aldehyde + NADH + H(+). The enzyme catalyses a secondary alcohol + NAD(+) = a ketone + NADH + H(+). The sequence is that of Alcohol dehydrogenase 2 (sodh-2) from Caenorhabditis elegans.